The sequence spans 508 residues: Alpha-amylase (508 aa).

Positions 1–19 (MLSLIIAACCVTVALAGTF) are cleaved as a signal peptide. Cysteine 46 and cysteine 102 are oxidised to a cystine. Ca(2+) is bound by residues asparagine 116, arginine 173, and aspartate 182. Cysteine 156 and cysteine 175 are oxidised to a cystine. A chloride-binding site is contributed by arginine 210. Residue aspartate 212 is the Nucleophile of the active site. Position 216 (histidine 216) interacts with Ca(2+). The active-site Proton donor is glutamate 248. Residues asparagine 311 and arginine 349 each contribute to the chloride site. Cystine bridges form between cysteine 383–cysteine 389 and cysteine 455–cysteine 467.

This sequence belongs to the glycosyl hydrolase 13 family. Monomer. Ca(2+) is required as a cofactor. Chloride serves as cofactor.

The enzyme catalyses Endohydrolysis of (1-&gt;4)-alpha-D-glucosidic linkages in polysaccharides containing three or more (1-&gt;4)-alpha-linked D-glucose units.. This Pecten maximus (King scallop) protein is Alpha-amylase.